The sequence spans 471 residues: Mitochondrial distribution and morphology protein 10 (471 aa).

Residues 313-338 (SNSAATPPRIKNSDSQVLSNNSTDSK) form a disordered region. Over residues 325–338 (SDSQVLSNNSTDSK) the composition is skewed to polar residues.

It belongs to the MDM10 family. In terms of assembly, component of the ER-mitochondria encounter structure (ERMES) or MDM complex, composed of MMM1, MDM10, MDM12 and MDM34. Associates with the mitochondrial outer membrane sorting assembly machinery SAM(core) complex.

The protein localises to the mitochondrion outer membrane. Its function is as follows. Component of the ERMES/MDM complex, which serves as a molecular tether to connect the endoplasmic reticulum and mitochondria. Components of this complex are involved in the control of mitochondrial shape and protein biogenesis and may function in phospholipid exchange. MDM10 is involved in the late assembly steps of the general translocase of the mitochondrial outer membrane (TOM complex). Functions in the TOM40-specific route of the assembly of outer membrane beta-barrel proteins, including the association of TOM40 with the receptor TOM22 and small TOM proteins. Can associate with the SAM(core) complex as well as the MDM12-MMM1 complex, both involved in late steps of the major beta-barrel assembly pathway, that is responsible for biogenesis of all outer membrane beta-barrel proteins. May act as a switch that shuttles between both complexes and channels precursor proteins into the TOM40-specific pathway. Plays a role in mitochondrial morphology and in the inheritance of mitochondria. In Debaryomyces hansenii (strain ATCC 36239 / CBS 767 / BCRC 21394 / JCM 1990 / NBRC 0083 / IGC 2968) (Yeast), this protein is Mitochondrial distribution and morphology protein 10.